Consider the following 96-residue polypeptide: C-C motif chemokine 20 (96 aa).

Residues 1 to 26 (MCCTKSLLLAALMSVLLLHLCGESEA) form the signal peptide. 2 disulfides stabilise this stretch: Cys-32–Cys-58 and Cys-33–Cys-74.

It belongs to the intercrine beta (chemokine CC) family. In terms of processing, C-terminal processed forms which lack 1, 3 or 6 amino acids are produced by proteolytic cleavage after secretion from peripheral blood monocytes. As to expression, expressed in the seminal plasma, endometrial fluid and follicular fluid (at protein level). Expressed predominantly in the liver, lymph nodes, appendix, peripheral blood lymphocytes, and fetal lung. Low levels seen in thymus, prostate, testis, small intestine and colon.

It localises to the secreted. Acts as a ligand for C-C chemokine receptor CCR6. Signals through binding and activation of CCR6 and induces a strong chemotactic response and mobilization of intracellular calcium ions. The ligand-receptor pair CCL20-CCR6 is responsible for the chemotaxis of dendritic cells (DC), effector/memory T-cells and B-cells and plays an important role at skin and mucosal surfaces under homeostatic and inflammatory conditions, as well as in pathology, including cancer and various autoimmune diseases. CCL20 acts as a chemotactic factor that attracts lymphocytes and, slightly, neutrophils, but not monocytes. Involved in the recruitment of both the pro-inflammatory IL17 producing helper T-cells (Th17) and the regulatory T-cells (Treg) to sites of inflammation. Required for optimal migration of thymic natural regulatory T cells (nTregs) and DN1 early thymocyte progenitor cells. C-terminal processed forms have been shown to be equally chemotactically active for leukocytes. Positively regulates sperm motility and chemotaxis via its binding to CCR6 which triggers Ca2+ mobilization in the sperm which is important for its motility. Inhibits proliferation of myeloid progenitors in colony formation assays. May be involved in formation and function of the mucosal lymphoid tissues by attracting lymphocytes and dendritic cells towards epithelial cells. Possesses antibacterial activity towards E.coli ATCC 25922 and S.aureus ATCC 29213. The sequence is that of C-C motif chemokine 20 (CCL20) from Homo sapiens (Human).